A 288-amino-acid polypeptide reads, in one-letter code: Polyamine aminopropyltransferase (288 aa).

Positions Glu-9–Asp-238 constitute a PABS domain. Gln-33 provides a ligand contact to S-methyl-5'-thioadenosine. His-64 and Asp-88 together coordinate spermidine. S-methyl-5'-thioadenosine contacts are provided by residues Glu-108 and Asp-140–Gly-141. Asp-158 (proton acceptor) is an active-site residue. Spermidine is bound at residue Asp-158–Asp-161. Pro-165 contributes to the S-methyl-5'-thioadenosine binding site.

The protein belongs to the spermidine/spermine synthase family. In terms of assembly, homodimer or homotetramer.

The protein localises to the cytoplasm. It catalyses the reaction S-adenosyl 3-(methylsulfanyl)propylamine + putrescine = S-methyl-5'-thioadenosine + spermidine + H(+). Its pathway is amine and polyamine biosynthesis; spermidine biosynthesis; spermidine from putrescine: step 1/1. Its function is as follows. Catalyzes the irreversible transfer of a propylamine group from the amino donor S-adenosylmethioninamine (decarboxy-AdoMet) to putrescine (1,4-diaminobutane) to yield spermidine. The sequence is that of Polyamine aminopropyltransferase from Shigella dysenteriae serotype 1 (strain Sd197).